Here is a 156-residue protein sequence, read N- to C-terminus: Ribosomal RNA large subunit methyltransferase H (156 aa).

S-adenosyl-L-methionine is bound by residues leucine 73, glycine 104, and isoleucine 123 to leucine 128.

This sequence belongs to the RNA methyltransferase RlmH family. Homodimer.

The protein resides in the cytoplasm. It carries out the reaction pseudouridine(1915) in 23S rRNA + S-adenosyl-L-methionine = N(3)-methylpseudouridine(1915) in 23S rRNA + S-adenosyl-L-homocysteine + H(+). Functionally, specifically methylates the pseudouridine at position 1915 (m3Psi1915) in 23S rRNA. The chain is Ribosomal RNA large subunit methyltransferase H from Burkholderia vietnamiensis (strain G4 / LMG 22486) (Burkholderia cepacia (strain R1808)).